We begin with the raw amino-acid sequence, 203 residues long: Holliday junction branch migration complex subunit RuvA (203 aa).

The domain I stretch occupies residues 1–64 (MIGRLRGIIL…EDAQLLYGFN (64 aa)). The segment at 65–142 (NKQERTLFKE…KGLHGDLFTP (78 aa)) is domain II. The interval 143–154 (AADLVLTSPAGP) is flexible linker. The tract at residues 155–203 (TADDAEQEAVAALVALGYKPQEASRMVSKIARPDANSETLIREALRAAL) is domain III.

Belongs to the RuvA family. As to quaternary structure, homotetramer. Forms an RuvA(8)-RuvB(12)-Holliday junction (HJ) complex. HJ DNA is sandwiched between 2 RuvA tetramers; dsDNA enters through RuvA and exits via RuvB. An RuvB hexamer assembles on each DNA strand where it exits the tetramer. Each RuvB hexamer is contacted by two RuvA subunits (via domain III) on 2 adjacent RuvB subunits; this complex drives branch migration. In the full resolvosome a probable DNA-RuvA(4)-RuvB(12)-RuvC(2) complex forms which resolves the HJ.

Its subcellular location is the cytoplasm. In terms of biological role, the RuvA-RuvB-RuvC complex processes Holliday junction (HJ) DNA during genetic recombination and DNA repair, while the RuvA-RuvB complex plays an important role in the rescue of blocked DNA replication forks via replication fork reversal (RFR). RuvA specifically binds to HJ cruciform DNA, conferring on it an open structure. The RuvB hexamer acts as an ATP-dependent pump, pulling dsDNA into and through the RuvAB complex. HJ branch migration allows RuvC to scan DNA until it finds its consensus sequence, where it cleaves and resolves the cruciform DNA. The sequence is that of Holliday junction branch migration complex subunit RuvA from Klebsiella pneumoniae (strain 342).